Here is a 168-residue protein sequence, read N- to C-terminus: Peptidoglycan-associated lipoprotein (168 aa).

The N-terminal stretch at 1 to 21 (MEMLKFGKFAALALAMAVAVG) is a signal peptide. A lipid anchor (N-palmitoyl cysteine) is attached at Cys22. Cys22 carries the S-diacylglycerol cysteine lipid modification. Residues 56–168 (SDEAALRAIT…AQNRRVELKK (113 aa)) enclose the OmpA-like domain. Positions 147-168 (RPVATGHDEQSWAQNRRVELKK) are disordered.

It belongs to the Pal lipoprotein family. The Tol-Pal system is composed of five core proteins: the inner membrane proteins TolA, TolQ and TolR, the periplasmic protein TolB and the outer membrane protein Pal. They form a network linking the inner and outer membranes and the peptidoglycan layer.

Its subcellular location is the cell outer membrane. In terms of biological role, part of the Tol-Pal system, which plays a role in outer membrane invagination during cell division and is important for maintaining outer membrane integrity. The sequence is that of Peptidoglycan-associated lipoprotein from Pseudomonas aeruginosa (strain ATCC 15692 / DSM 22644 / CIP 104116 / JCM 14847 / LMG 12228 / 1C / PRS 101 / PAO1).